The following is a 59-amino-acid chain: Conorfamide-Ep1 (59 aa).

The signal sequence occupies residues 1 to 19 (MSGCGFLLLALLLLVTVEA). A propeptide spanning residues 20–25 (TKMEKK) is cleaved from the precursor. Ile-43 is subject to Isoleucine amide. A propeptide spanning residues 45 to 59 (RRDMQSPLLSERLRF) is cleaved from the precursor.

The protein belongs to the FARP (FMRFamide related peptide) family. As to expression, expressed by the venom duct.

The protein resides in the secreted. Neurotoxin that is active on vertebrates. When tested at high doses (10 uM), the toxin affects all zebrafish and mouse DRG neurons in culture, which could be an indication of an effect on a widely expressed receptor or ion channel found in both species. At low doses (1 uM), the effects of the toxin are confined to a specific subpopulation of zebrafish and mouse DRG neurons. In vivo, it induces long-lasting dramatic alterations in the locomotor behavior of zebrafish larvae. It rapidly induces hypoactivity and death of larvae at high doses and it causes hyperactivity at lower doses. In zebrafish adults, intramuscular injection causes the decrease of the movements and visited spaces. In mice, intracranial injection causes lethargy and prolonges sleeping phases and reduced movement. The chain is Conorfamide-Ep1 from Conus episcopatus (Bishop's cone).